The chain runs to 304 residues: Protein Largen (304 aa).

The span at 1 to 13 shows a compositional bias: polar residues; the sequence is MSAKSKGNPSSSC. 4 disordered regions span residues 1-27, 66-91, 114-160, and 239-304; these read MSAK…TKVK, QLED…TASS, LTVL…GGLP, and HPPG…TTTV. The stretch at 33 to 70 forms a coiled coil; sequence IVEDLELVLGDLKDVAKELKEVVDQIDTLTSDLQLEDE. Low complexity predominate over residues 77–91; that stretch reads TDTLNSSSSGTTASS. Composition is skewed to pro residues over residues 120-129, 239-261, and 277-289; these read PNPPPPPPRL, HPPG…PPFP, and PIRP…PTAP.

Its function is as follows. Regulator of cell size that promotes cell size increase independently of mTOR and Hippo signaling pathways. Acts by stimulating the translation of specific mRNAs, including those encoding proteins affecting mitochondrial functions. Increases mitochondrial mass and respiration. This Homo sapiens (Human) protein is Protein Largen (PRR16).